The chain runs to 250 residues: Ubiquinone/menaquinone biosynthesis C-methyltransferase UbiE (250 aa).

Residues Thr-74, Asp-94, 122-123 (DA), and Ser-139 contribute to the S-adenosyl-L-methionine site.

Belongs to the class I-like SAM-binding methyltransferase superfamily. MenG/UbiE family.

The catalysed reaction is a 2-demethylmenaquinol + S-adenosyl-L-methionine = a menaquinol + S-adenosyl-L-homocysteine + H(+). It carries out the reaction a 2-methoxy-6-(all-trans-polyprenyl)benzene-1,4-diol + S-adenosyl-L-methionine = a 5-methoxy-2-methyl-3-(all-trans-polyprenyl)benzene-1,4-diol + S-adenosyl-L-homocysteine + H(+). It functions in the pathway quinol/quinone metabolism; menaquinone biosynthesis; menaquinol from 1,4-dihydroxy-2-naphthoate: step 2/2. It participates in cofactor biosynthesis; ubiquinone biosynthesis. In terms of biological role, methyltransferase required for the conversion of demethylmenaquinol (DMKH2) to menaquinol (MKH2) and the conversion of 2-polyprenyl-6-methoxy-1,4-benzoquinol (DDMQH2) to 2-polyprenyl-3-methyl-6-methoxy-1,4-benzoquinol (DMQH2). This is Ubiquinone/menaquinone biosynthesis C-methyltransferase UbiE from Roseobacter denitrificans (strain ATCC 33942 / OCh 114) (Erythrobacter sp. (strain OCh 114)).